A 293-amino-acid polypeptide reads, in one-letter code: Glutamyl-Q tRNA(Asp) synthetase (293 aa).

Residues 26-30 and aspartate 62 each bind L-glutamate; that span reads RYAPS. Residues 29 to 39 carry the 'HIGH' region motif; it reads PSPTGALHLGN. Cysteine 118, cysteine 120, tyrosine 131, and cysteine 135 together coordinate Zn(2+). 2 residues coordinate L-glutamate: tyrosine 178 and arginine 196. The short motif at 234–238 is the 'KMSKS' region element; that stretch reads KLSKR. Residue lysine 237 participates in ATP binding.

The protein belongs to the class-I aminoacyl-tRNA synthetase family. GluQ subfamily. The cofactor is Zn(2+).

Functionally, catalyzes the tRNA-independent activation of glutamate in presence of ATP and the subsequent transfer of glutamate onto a tRNA(Asp). Glutamate is transferred on the 2-amino-5-(4,5-dihydroxy-2-cyclopenten-1-yl) moiety of the queuosine in the wobble position of the QUC anticodon. The protein is Glutamyl-Q tRNA(Asp) synthetase of Parasynechococcus marenigrum (strain WH8102).